Consider the following 431-residue polypeptide: Histidinol dehydrogenase 1 (431 aa).

Residues Tyr-127, Gln-188, and Asn-211 each coordinate NAD(+). Substrate contacts are provided by Ser-234, Gln-256, and His-259. Zn(2+)-binding residues include Gln-256 and His-259. Active-site proton acceptor residues include Glu-324 and His-325. 4 residues coordinate substrate: His-325, Asp-358, Glu-412, and His-417. Residue Asp-358 participates in Zn(2+) binding. His-417 contributes to the Zn(2+) binding site.

It belongs to the histidinol dehydrogenase family. Zn(2+) is required as a cofactor.

It carries out the reaction L-histidinol + 2 NAD(+) + H2O = L-histidine + 2 NADH + 3 H(+). It functions in the pathway amino-acid biosynthesis; L-histidine biosynthesis; L-histidine from 5-phospho-alpha-D-ribose 1-diphosphate: step 9/9. Catalyzes the sequential NAD-dependent oxidations of L-histidinol to L-histidinaldehyde and then to L-histidine. This is Histidinol dehydrogenase 1 from Trichormus variabilis (strain ATCC 29413 / PCC 7937) (Anabaena variabilis).